A 350-amino-acid polypeptide reads, in one-letter code: Methionine aminopeptidase 1D, chloroplastic/mitochondrial (350 aa).

The transit peptide at 1–49 directs the protein to the chloroplast and mitochondrion; sequence MAGVKSLQPRLISSFLGNNSIRSTQPLIHLFRFDLGRRHVSMQLSRTFS. Residue Gly50 is modified to N-acetylglycine. The disordered stretch occupies residues 71 to 90; that stretch reads RLRPGNVSPRRPVPGHITKP. His180 serves as a coordination point for substrate. A divalent metal cation contacts are provided by Asp197, Asp208, and His271. Position 278 (His278) interacts with substrate. A divalent metal cation is bound by residues Glu303 and Glu334.

Belongs to the peptidase M24A family. Methionine aminopeptidase type 1 subfamily. The cofactor is Co(2+). Zn(2+) is required as a cofactor. Mn(2+) serves as cofactor. It depends on Fe(2+) as a cofactor. As to expression, ubiquitous. Preferentially expressed in green tissues.

The protein localises to the plastid. The protein resides in the chloroplast. It localises to the mitochondrion. The catalysed reaction is Release of N-terminal amino acids, preferentially methionine, from peptides and arylamides.. In terms of biological role, removes the N-terminal methionine from nascent proteins. The N-terminal methionine is often cleaved when the second residue in the primary sequence is small and uncharged (Met-Ala-, Cys, Gly, Pro, Ser, Thr, or Val). This Arabidopsis thaliana (Mouse-ear cress) protein is Methionine aminopeptidase 1D, chloroplastic/mitochondrial (MAP1D).